Reading from the N-terminus, the 83-residue chain is MSNKGQLLQDPFLNALRREHVPVSIYLVNGIKLQGQIESFDQYVVLLRNTVTQMVYKHAISTIVPGRAVNFSTAEPADAESGN.

Residues Asp-10–Val-69 enclose the Sm domain.

Belongs to the Hfq family. As to quaternary structure, homohexamer.

In terms of biological role, RNA chaperone that binds small regulatory RNA (sRNAs) and mRNAs to facilitate mRNA translational regulation in response to envelope stress, environmental stress and changes in metabolite concentrations. Also binds with high specificity to tRNAs. This chain is RNA-binding protein Hfq, found in Paracidovorax citrulli (strain AAC00-1) (Acidovorax citrulli).